The following is a 256-amino-acid chain: Nuclear shuttle protein (256 aa).

The short motif at 21-42 (YQGFRRTAIVTRHDGKRRQHQS) is the Bipartite nuclear localization signal element. The Nuclear localization signal signature appears at 81–96 (QLGKIEPNRCRSYIKL). Positions 150–187 (ELFGARINSHGNLAVMPSLKDRFYIRHLLKRVLSVDKD) are interaction with Arabidopsis thaliana NSI protein.

This sequence belongs to the begomovirus nuclear shuttle protein family. In terms of assembly, binds to single-stranded and double-stranded viral DNA. Interacts with the host nuclear shuttle interacting (NSI) protein. This interaction may allow NSP to recruit NSI monomers to the viral genome and thus regulate nuclear export of viral genome by NSP.

Its subcellular location is the host nucleus. The protein resides in the host cytoplasm. It is found in the host cell membrane. Functionally, binds to the genomic viral ssDNA, shuttles it into and out of the cell nucleus. Begomoviruses use 2 proteins to transport their DNA from cell to cell. The nuclear shuttle protein (NSP) shuttles it between nucleus and cytoplasm and the movement protein (MP) probably transports the DNA-NSP complex to the cell periphery and facilitates movement across the cell wall. The polypeptide is Nuclear shuttle protein (Macroptilium lathyroides (Lima bean)).